We begin with the raw amino-acid sequence, 347 residues long: Methylthioribose-1-phosphate isomerase (347 aa).

Residues 46–48 (RGA), arginine 89, and glutamine 196 each bind substrate. Aspartate 237 serves as the catalytic Proton donor. Substrate is bound at residue 247–248 (NK).

This sequence belongs to the eIF-2B alpha/beta/delta subunits family. MtnA subfamily.

It carries out the reaction 5-(methylsulfanyl)-alpha-D-ribose 1-phosphate = 5-(methylsulfanyl)-D-ribulose 1-phosphate. It functions in the pathway amino-acid biosynthesis; L-methionine biosynthesis via salvage pathway; L-methionine from S-methyl-5-thio-alpha-D-ribose 1-phosphate: step 1/6. Functionally, catalyzes the interconversion of methylthioribose-1-phosphate (MTR-1-P) into methylthioribulose-1-phosphate (MTRu-1-P). This is Methylthioribose-1-phosphate isomerase from Chloroflexus aurantiacus (strain ATCC 29366 / DSM 635 / J-10-fl).